Consider the following 593-residue polypeptide: NADH-quinone oxidoreductase subunit C/D (593 aa).

The tract at residues Met1 to Gln184 is NADH dehydrogenase I subunit C. The NADH dehydrogenase I subunit D stretch occupies residues Asp208–Arg593.

In the N-terminal section; belongs to the complex I 30 kDa subunit family. The protein in the C-terminal section; belongs to the complex I 49 kDa subunit family. In terms of assembly, NDH-1 is composed of 13 different subunits. Subunits NuoB, CD, E, F, and G constitute the peripheral sector of the complex.

The protein resides in the cell inner membrane. The enzyme catalyses a quinone + NADH + 5 H(+)(in) = a quinol + NAD(+) + 4 H(+)(out). In terms of biological role, NDH-1 shuttles electrons from NADH, via FMN and iron-sulfur (Fe-S) centers, to quinones in the respiratory chain. The immediate electron acceptor for the enzyme in this species is believed to be ubiquinone. Couples the redox reaction to proton translocation (for every two electrons transferred, four hydrogen ions are translocated across the cytoplasmic membrane), and thus conserves the redox energy in a proton gradient. The chain is NADH-quinone oxidoreductase subunit C/D from Pseudomonas putida (strain W619).